Consider the following 445-residue polypeptide: Rab GDP dissociation inhibitor beta (445 aa).

An N-acetylmethionine modification is found at M1. K112 carries the N6-acetyllysine modification. S130 carries the post-translational modification Phosphoserine. K269 bears the N6-acetyllysine mark. Position 382 is a phosphoserine (S382).

Belongs to the Rab GDI family. Interacts with RHOH. Interacts with the GDP-bound inactive forms of RAB3A, RAB3B, RAB3C, RAB5A, RAB5B, RAB5C, RAB8A, RAB8B, RAB10, RAB12, RAB35, and RAB43; binds RAB3D to a lesser extent. Interacts with DZIP1; this interaction negatively regulates the interaction of GDI2 with GDP-bound RAB8A.

The protein localises to the cytoplasm. It is found in the membrane. Its subcellular location is the golgi apparatus. It localises to the trans-Golgi network. GDP-dissociation inhibitor preventing the GDP to GTP exchange of most Rab proteins. By keeping these small GTPases in their inactive GDP-bound form regulates intracellular membrane trafficking. Negatively regulates protein transport to the cilium and ciliogenesis through the inhibition of RAB8A. This is Rab GDP dissociation inhibitor beta (GDI2) from Sus scrofa (Pig).